The primary structure comprises 446 residues: Probable carboxylesterase 16 (446 aa).

The tract at residues 84–131 is disordered; sequence PEPDSLRHKDNYNHQPRSDRRHSYGPNHNSPAPAERNESRRNSYGCNN. Residues 87–105 show a composition bias toward basic and acidic residues; sequence DSLRHKDNYNHQPRSDRRH. The Involved in the stabilization of the negatively charged intermediate by the formation of the oxyanion hole motif lies at 158 to 160; the sequence is HGG. Active-site residues include Ser-274, Asp-378, and His-408.

It belongs to the 'GDXG' lipolytic enzyme family. As to expression, expressed in roots, leaves, stems, flowers and siliques.

It catalyses the reaction a carboxylic ester + H2O = an alcohol + a carboxylate + H(+). Carboxylesterase acting on esters with varying acyl chain length. The chain is Probable carboxylesterase 16 (CXE16) from Arabidopsis thaliana (Mouse-ear cress).